A 240-amino-acid polypeptide reads, in one-letter code: 1-(5-phosphoribosyl)-5-[(5-phosphoribosylamino)methylideneamino] imidazole-4-carboxamide isomerase (240 aa).

The active-site Proton acceptor is Asp8. Residue Asp129 is the Proton donor of the active site.

Belongs to the HisA/HisF family.

It is found in the cytoplasm. It catalyses the reaction 1-(5-phospho-beta-D-ribosyl)-5-[(5-phospho-beta-D-ribosylamino)methylideneamino]imidazole-4-carboxamide = 5-[(5-phospho-1-deoxy-D-ribulos-1-ylimino)methylamino]-1-(5-phospho-beta-D-ribosyl)imidazole-4-carboxamide. It functions in the pathway amino-acid biosynthesis; L-histidine biosynthesis; L-histidine from 5-phospho-alpha-D-ribose 1-diphosphate: step 4/9. This chain is 1-(5-phosphoribosyl)-5-[(5-phosphoribosylamino)methylideneamino] imidazole-4-carboxamide isomerase, found in Listeria monocytogenes serotype 4a (strain HCC23).